Reading from the N-terminus, the 325-residue chain is Tetraacyldisaccharide 4'-kinase (325 aa).

55 to 62 serves as a coordination point for ATP; sequence TAGGNGKT.

This sequence belongs to the LpxK family.

It catalyses the reaction a lipid A disaccharide + ATP = a lipid IVA + ADP + H(+). The protein operates within glycolipid biosynthesis; lipid IV(A) biosynthesis; lipid IV(A) from (3R)-3-hydroxytetradecanoyl-[acyl-carrier-protein] and UDP-N-acetyl-alpha-D-glucosamine: step 6/6. Functionally, transfers the gamma-phosphate of ATP to the 4'-position of a tetraacyldisaccharide 1-phosphate intermediate (termed DS-1-P) to form tetraacyldisaccharide 1,4'-bis-phosphate (lipid IVA). In Salmonella paratyphi B (strain ATCC BAA-1250 / SPB7), this protein is Tetraacyldisaccharide 4'-kinase.